The following is a 309-amino-acid chain: Foldase protein PrsA (309 aa).

An N-terminal signal peptide occupies residues 1 to 22; that stretch reads MKTRSKLAAGFLTLMSVATLAA. C23 carries the N-palmitoyl cysteine lipid modification. A lipid anchor (S-diacylglycerol cysteine) is attached at C23. A PpiC domain is found at 146-241; that stretch reads TPETSVQVIK…TSYYIIKVTD (96 aa).

This sequence belongs to the PrsA family.

It is found in the cell membrane. It carries out the reaction [protein]-peptidylproline (omega=180) = [protein]-peptidylproline (omega=0). Plays a major role in protein secretion by helping the post-translocational extracellular folding of several secreted proteins. This Streptococcus agalactiae serotype Ia (strain ATCC 27591 / A909 / CDC SS700) protein is Foldase protein PrsA.